The following is a 447-amino-acid chain: MTTRKYFGTDGIRGRVGQFPITPEFMLKLGWAAGMAFRKMGACRILVGKDTRISGYMFESALEAGLSAAGADVLLLGPMPTPAIAYLTRTFHAEAGIVISASHNPHYDNGIKFFSGQGTKLPDEIEMMIEELLDAPMTVAESENLGKVSRINDAAGRYIEFCKSSVPTSTDFAGLKVVIDCAHGATYKVAPNVFRELGAQVVVLSAQPDGLNINKDCGSTHMEALQAAVVAEHADMGIGFDGDGDRVLMVDHTGTIVDGDELLYIIARDLHERGRLQGGVVGTLMSNLGLELALAEQNIPFVRANVGDRYVIAELLERNWQIGGENSGHIVCFQHATTGDAIIASLQVILALRRSGISLAEARLKLRKCPQILINVRFEGSSVDPVTHPSVQEACARVTEQMAGRGRVLLRKSGTEPLVRVMVEGEDEAQVRAYAEELAKLVAEVCA.

The Phosphoserine intermediate role is filled by serine 102. The Mg(2+) site is built by serine 102, aspartate 241, aspartate 243, and aspartate 245. Serine 102 is subject to Phosphoserine.

Belongs to the phosphohexose mutase family. It depends on Mg(2+) as a cofactor. In terms of processing, activated by phosphorylation.

The catalysed reaction is alpha-D-glucosamine 1-phosphate = D-glucosamine 6-phosphate. Its function is as follows. Catalyzes the conversion of glucosamine-6-phosphate to glucosamine-1-phosphate. This chain is Phosphoglucosamine mutase, found in Pseudomonas syringae pv. tomato (strain ATCC BAA-871 / DC3000).